Reading from the N-terminus, the 273-residue chain is NH(3)-dependent NAD(+) synthetase (273 aa).

Position 47–54 (47–54) interacts with ATP; it reads GISGGQDS. D53 lines the Mg(2+) pocket. R139 is a binding site for deamido-NAD(+). T159 is a binding site for ATP. E164 provides a ligand contact to Mg(2+). 2 residues coordinate deamido-NAD(+): K172 and D179. K188 and T210 together coordinate ATP. 259–260 is a deamido-NAD(+) binding site; sequence HK.

Belongs to the NAD synthetase family. As to quaternary structure, homodimer.

The catalysed reaction is deamido-NAD(+) + NH4(+) + ATP = AMP + diphosphate + NAD(+) + H(+). Its pathway is cofactor biosynthesis; NAD(+) biosynthesis; NAD(+) from deamido-NAD(+) (ammonia route): step 1/1. Its function is as follows. Catalyzes the ATP-dependent amidation of deamido-NAD to form NAD. Uses ammonia as a nitrogen source. In Staphylococcus aureus (strain N315), this protein is NH(3)-dependent NAD(+) synthetase.